We begin with the raw amino-acid sequence, 260 residues long: MLLLLSPAKSLDYATPLPEGWPHSTPCFIAQSSALIALLRSRSPQQIAALMQLSAPLAALNAERYQAWQPRCSASNSRQALLAFDGDVYEGLQARTLSAPDLDWAQQHLAILSGLYGVLRPLDRIQPHRLEMGTRLATAAGGNLYQFWGRQIAEHLNHRLHDDPDPVLVNLASQEYFKAVDRKALNARVVECVFEDFKGGAYKIISFYAKRARGLMARHAITHRLSRPRQLEGFGLGGYAYAPAASDPERLVFRRKSPAA.

This sequence belongs to the UPF0246 family.

The polypeptide is UPF0246 protein Veis_4789 (Verminephrobacter eiseniae (strain EF01-2)).